Here is a 234-residue protein sequence, read N- to C-terminus: Enterobactin synthase component D (234 aa).

Mg(2+) is bound by residues D107, E109, and E152.

It belongs to the P-Pant transferase superfamily. EntD family. EntB, EntD, EntE, and EntF form a multienzyme complex called enterobactin synthase. Mg(2+) is required as a cofactor.

The protein localises to the membrane. It carries out the reaction apo-[aryl-carrier protein] + CoA = holo-[aryl-carrier protein] + adenosine 3',5'-bisphosphate + H(+). The enzyme catalyses apo-[peptidyl-carrier protein] + CoA = holo-[peptidyl-carrier protein] + adenosine 3',5'-bisphosphate + H(+). It participates in siderophore biosynthesis; enterobactin biosynthesis. In terms of biological role, involved in the biosynthesis of the siderophore enterobactin (enterochelin), which is a macrocyclic trimeric lactone of N-(2,3-dihydroxybenzoyl)-serine. The serine trilactone serves as a scaffolding for the three catechol functionalities that provide hexadentate coordination for the tightly ligated iron(2+) atoms. Plays an essential role in the assembly of the enterobactin by catalyzing the transfer of the 4'-phosphopantetheine (Ppant) moiety from coenzyme A to the apo-domains of both EntB (ArCP domain) and EntF (PCP domain) to yield their holo-forms which make them competent for the activation of 2,3-dihydroxybenzoate (DHB) and L-serine, respectively. The polypeptide is Enterobactin synthase component D (Salmonella typhimurium (strain LT2 / SGSC1412 / ATCC 700720)).